We begin with the raw amino-acid sequence, 704 residues long: Translational regulator orb2 (704 aa).

The tract at residues 1 to 64 is disordered; the sequence is MDSLKLPKAN…PPGLGSSTPI (64 aa). A gln/His-rich region spans residues 1–87; that stretch reads MDSLKLPKAN…ILQSFHHSKH (87 aa). The segment covering 9–42 has biased composition (low complexity); that stretch reads ANSATSSASGSNSNLSGSTSASASAATSPTSSGT. Residues serine 74, serine 88, and serine 100 each carry the phosphoserine modification. 3 disordered regions span residues 82-106, 166-266, and 417-438; these read FHHS…SNLL, LPNL…GVSP, and SPSR…GGNV. Residues 163–240 form a gln/His-rich region; sequence CGGLPNLNLN…PSSPGGGGGG (78 aa). 3 stretches are compositionally biased toward low complexity: residues 176-205, 218-233, and 417-429; these read QLHQ…QQQL, QQQQ…SPSS, and SPSR…PHSP. Residues serine 425 and serine 428 each carry the phosphoserine modification. 2 consecutive RRM domains span residues 447–538 and 555–637; these read RKVF…PWRL and KTVF…PYVL.

Monomer. Upon neuronal stimulation, forms stable amyloid-like oligomers composed of isoform A and isoform B which are required for formation of persistent long-term memory. Isoform A is critical for oligomer formation. Phe-5 of isoform A is required for amyloid-like oligomerization. Rapidly forms amyloids and toxic intermediates are extremely transient. Unlike in the adult nervous system, remains monomeric in the early embryo. Interacts with the translational regulator bol. Interacts with Tob; the interaction is enhanced by neuronal stimulation, stabilizes isoform A and induces oligomerization. Post-translationally, phosphorylation regulates interaction with Tob and oligomerization. Protein phosphatase 2A keeps both Orb2 and Tob in an unphosphorylated form. Following synaptic activation, unphosphorylated Orb2 is bound and stabilized by unphosphorylated Tob. Tob recruits activated LimK which phosphorylates both Orb2 and Tob and enhances Orb2 oligomerization. Broadly expressed throughout the nervous system of embryo, larva and adult including the ventral nerve cord and brain (at protein level). In early embryos, deposited maternally and distributed uniformly throughout the embryo until the extended germband stage. By mid-embryogenesis, highest levels are found in the central and peripheral nervous systems with lower expression also detected in the ectoderm and mesoderm. In adults, high levels are present in the head and body of both sexes with higher expression in testis than ovary. In the ovary, expressed in both germ and follicle cells. In adult head, predominantly neuronal with broad expression throughout the brain and ventral ganglia including the mushroom body.

It is found in the perikaryon. The protein resides in the cell projection. The protein localises to the axon. It localises to the dendrite. Its subcellular location is the synapse. It is found in the cytoplasm. The protein resides in the perinuclear region. Functionally, RNA-binding protein involved in translational regulation and required for long-term memory. Required in mushroom body gamma neurons for long-term memory in male courtship. Binds to mRNA 3'-UTRs. In its monomeric form, acts as a translational repressor of genes involved in neuronal growth, synapse formation and protein turnover. In its amyloid-like oligomeric form, acts as a translational activator. The monomeric form reduces poly(A) tail length and destabilizes mRNA while the oligomeric form protects and elongates the poly(A) tail and stabilizes mRNA. Involved in asymmetric cell division in the central nervous system. Plays a role in synapse formation and morphology at neuromuscular junctions by modulating the translation of the tumor suppressor brat. Required for the progression of spermatogenesis through meiosis and for sperm differentiation. During sperm differentiation, required to asymmetrically localize and activate the translation of protein kinase aPKC mRNAs which is necessary for spermatid cyst polarization. Also required during spermatid cyst polarization for localization and translation of its own mRNA. Required for initial memory acquisition. Following subsequent late dopaminergic pathway activation, recruits isoform B into a complex to activate translation of CaMKII which is required for long-term memory consolidation. In Drosophila melanogaster (Fruit fly), this protein is Translational regulator orb2.